A 442-amino-acid chain; its full sequence is Tubulin beta chain (442 aa).

Gln11, Glu69, Ser138, Gly142, Thr143, Gly144, Asn204, and Asn226 together coordinate GTP. Glu69 serves as a coordination point for Mg(2+).

This sequence belongs to the tubulin family. Dimer of alpha and beta chains. A typical microtubule is a hollow water-filled tube with an outer diameter of 25 nm and an inner diameter of 15 nM. Alpha-beta heterodimers associate head-to-tail to form protofilaments running lengthwise along the microtubule wall with the beta-tubulin subunit facing the microtubule plus end conferring a structural polarity. Microtubules usually have 13 protofilaments but different protofilament numbers can be found in some organisms and specialized cells. The cofactor is Mg(2+).

It localises to the cytoplasm. Its subcellular location is the cytoskeleton. Functionally, tubulin is the major constituent of microtubules, a cylinder consisting of laterally associated linear protofilaments composed of alpha- and beta-tubulin heterodimers. Microtubules grow by the addition of GTP-tubulin dimers to the microtubule end, where a stabilizing cap forms. Below the cap, tubulin dimers are in GDP-bound state, owing to GTPase activity of alpha-tubulin. The protein is Tubulin beta chain of Trypanosoma cruzi.